Consider the following 346-residue polypeptide: Probable dual-specificity RNA methyltransferase RlmN (346 aa).

Residue Glu-91 is the Proton acceptor of the active site. Positions 97–325 constitute a Radical SAM core domain; it reads TEKRLTVCVS…VSVRYSKGLE (229 aa). A disulfide bridge links Cys-104 with Cys-330. [4Fe-4S] cluster contacts are provided by Cys-111, Cys-115, and Cys-118. S-adenosyl-L-methionine is bound by residues 158–159, Ser-188, 211–213, and Asn-287; these read GE and SLH. The active-site S-methylcysteine intermediate is Cys-330.

This sequence belongs to the radical SAM superfamily. RlmN family. [4Fe-4S] cluster serves as cofactor.

The protein localises to the cytoplasm. It catalyses the reaction adenosine(2503) in 23S rRNA + 2 reduced [2Fe-2S]-[ferredoxin] + 2 S-adenosyl-L-methionine = 2-methyladenosine(2503) in 23S rRNA + 5'-deoxyadenosine + L-methionine + 2 oxidized [2Fe-2S]-[ferredoxin] + S-adenosyl-L-homocysteine. The enzyme catalyses adenosine(37) in tRNA + 2 reduced [2Fe-2S]-[ferredoxin] + 2 S-adenosyl-L-methionine = 2-methyladenosine(37) in tRNA + 5'-deoxyadenosine + L-methionine + 2 oxidized [2Fe-2S]-[ferredoxin] + S-adenosyl-L-homocysteine. In terms of biological role, specifically methylates position 2 of adenine 2503 in 23S rRNA and position 2 of adenine 37 in tRNAs. The chain is Probable dual-specificity RNA methyltransferase RlmN from Picosynechococcus sp. (strain ATCC 27264 / PCC 7002 / PR-6) (Agmenellum quadruplicatum).